Consider the following 101-residue polypeptide: NAD(P)H-quinone oxidoreductase subunit 4L, chloroplastic (101 aa).

3 helical membrane-spanning segments follow: residues 2–22, 32–52, and 61–81; these read MLEH…YGLI, MCLE…SDFF, and IFSI…LAIV.

The protein belongs to the complex I subunit 4L family. As to quaternary structure, NDH is composed of at least 16 different subunits, 5 of which are encoded in the nucleus.

It is found in the plastid. The protein resides in the chloroplast thylakoid membrane. It carries out the reaction a plastoquinone + NADH + (n+1) H(+)(in) = a plastoquinol + NAD(+) + n H(+)(out). It catalyses the reaction a plastoquinone + NADPH + (n+1) H(+)(in) = a plastoquinol + NADP(+) + n H(+)(out). In terms of biological role, NDH shuttles electrons from NAD(P)H:plastoquinone, via FMN and iron-sulfur (Fe-S) centers, to quinones in the photosynthetic chain and possibly in a chloroplast respiratory chain. The immediate electron acceptor for the enzyme in this species is believed to be plastoquinone. Couples the redox reaction to proton translocation, and thus conserves the redox energy in a proton gradient. The sequence is that of NAD(P)H-quinone oxidoreductase subunit 4L, chloroplastic from Helianthus annuus (Common sunflower).